Consider the following 316-residue polypeptide: UPF0324 membrane protein SO_4708 (316 aa).

Transmembrane regions (helical) follow at residues 61–80 (LLSY…AAIE), 85–107 (NLGL…TRAL), 114–136 (GHLI…APAV), 146–168 (ALAC…GHLL), 175–197 (FGVW…SAYG), 207–226 (IKLA…ALIF), 233–252 (LNLP…AHWL), 262–281 (LFMV…GAGI), and 293–315 (PLLL…ILYF).

It belongs to the UPF0324 family.

It localises to the cell membrane. This is UPF0324 membrane protein SO_4708 from Shewanella oneidensis (strain ATCC 700550 / JCM 31522 / CIP 106686 / LMG 19005 / NCIMB 14063 / MR-1).